A 377-amino-acid chain; its full sequence is Nitric oxide reductase FlRd-NAD(+) reductase (377 aa).

The protein belongs to the FAD-dependent oxidoreductase family. It depends on FAD as a cofactor.

The protein resides in the cytoplasm. The catalysed reaction is 2 reduced [nitric oxide reductase rubredoxin domain] + NAD(+) + H(+) = 2 oxidized [nitric oxide reductase rubredoxin domain] + NADH. The protein operates within nitrogen metabolism; nitric oxide reduction. Functionally, one of at least two accessory proteins for anaerobic nitric oxide (NO) reductase. Reduces the rubredoxin moiety of NO reductase. The sequence is that of Nitric oxide reductase FlRd-NAD(+) reductase from Citrobacter koseri (strain ATCC BAA-895 / CDC 4225-83 / SGSC4696).